The sequence spans 200 residues: DNA dC-&gt;dU-editing enzyme APOBEC-3H (200 aa).

Residues 4–126 (LTAETFRLQF…KPQQKGLRLL (123 aa)) form the CMP/dCMP-type deaminase domain. Histidine 54 is a binding site for Zn(2+). Residue glutamate 56 is the Proton donor of the active site. Residues cysteine 85 and cysteine 88 each coordinate Zn(2+). Residues 160–182 (YKMLEELDKNSRAIKRRLERIKI) are a coiled coil.

It belongs to the cytidine and deoxycytidylate deaminase family. In terms of assembly, homodimer. Interacts with AGO1, AGO2 and AGO3. Zn(2+) is required as a cofactor. In terms of processing, (Microbial infection) Following infection by some HIV-1 strains, such as isolate BRU/LAI, can be ubiquitinated by a cullin-5-RING E3 ubiquitin-protein ligase complex (ECS complex) hijacked by the HIV-1 Vif protein, leading to its degradation. Ubiquitination by the ECS complex is however less efficent compared to APOBEC3G or APOBEC3G. As to expression, expressed in lymphoid organs. Also detected in non-lymphoid tissues including lung, testis, ovary, fetal liver and skin.

The protein localises to the cytoplasm. It localises to the nucleus. The protein resides in the P-body. The enzyme catalyses a 2'-deoxycytidine in single-stranded DNA + H2O + H(+) = a 2'-deoxyuridine in single-stranded DNA + NH4(+). Its activity is regulated as follows. APOBEC3H activity is regulated by RNA. While RNA-binding inhibits the DNA deaminase activity, double-stranded RNA is required for HIV-1 restriction by promoting APOBEC3H homodimerization and packaging into retroviral nucleocapsids. With respect to regulation, (Microbial infection) Antiviral activity is inhibited to some extent by the HIV-1 virion infectivity factor (VIF), that prevents its incorporation into progeny virions by both inhibiting its translation and/or by inducing its ubiquitination and subsequent degradation by the 26S proteasome. DNA deaminase (cytidine deaminase) which acts as an inhibitor of retrovirus replication and retrotransposon mobility via deaminase-dependent and -independent mechanisms. The A3H-var/haplotype 2 exhibits antiviral activity against vif-deficient HIV-1. After the penetration of retroviral nucleocapsids into target cells of infection and the initiation of reverse transcription, it can induce the conversion of cytosine to uracil in the minus-sense single-strand viral DNA, leading to G-to-A hypermutations in the subsequent plus-strand viral DNA. The resultant detrimental levels of mutations in the proviral genome, along with a deamination-independent mechanism that works prior to the proviral integration, together exert efficient antiretroviral effects in infected target cells. Selectively targets single-stranded DNA and does not deaminate double-stranded DNA or single- or double-stranded RNA. Exhibits antiviral activity also against T-cell leukemia virus type 1 (HTLV-1) and may inhibit the mobility of LTR and non-LTR retrotransposons. The polypeptide is DNA dC-&gt;dU-editing enzyme APOBEC-3H (Homo sapiens (Human)).